Consider the following 71-residue polypeptide: Translation initiation factor IF-1 (71 aa).

Residues 1 to 71 (MANDVIEIEG…TKGRITYRFR (71 aa)) form the S1-like domain.

It belongs to the IF-1 family. In terms of assembly, component of the 30S ribosomal translation pre-initiation complex which assembles on the 30S ribosome in the order IF-2 and IF-3, IF-1 and N-formylmethionyl-tRNA(fMet); mRNA recruitment can occur at any time during PIC assembly.

The protein resides in the cytoplasm. One of the essential components for the initiation of protein synthesis. Stabilizes the binding of IF-2 and IF-3 on the 30S subunit to which N-formylmethionyl-tRNA(fMet) subsequently binds. Helps modulate mRNA selection, yielding the 30S pre-initiation complex (PIC). Upon addition of the 50S ribosomal subunit IF-1, IF-2 and IF-3 are released leaving the mature 70S translation initiation complex. This chain is Translation initiation factor IF-1, found in Leuconostoc mesenteroides subsp. mesenteroides (strain ATCC 8293 / DSM 20343 / BCRC 11652 / CCM 1803 / JCM 6124 / NCDO 523 / NBRC 100496 / NCIMB 8023 / NCTC 12954 / NRRL B-1118 / 37Y).